We begin with the raw amino-acid sequence, 209 residues long: Uracil phosphoribosyltransferase (209 aa).

5-phospho-alpha-D-ribose 1-diphosphate-binding positions include Arg-79, Arg-104, and 131–139 (DPMLATGGS). Uracil is bound by residues Ile-194 and 199 to 201 (GDA). Asp-200 contributes to the 5-phospho-alpha-D-ribose 1-diphosphate binding site.

Belongs to the UPRTase family. Mg(2+) serves as cofactor.

The enzyme catalyses UMP + diphosphate = 5-phospho-alpha-D-ribose 1-diphosphate + uracil. Its pathway is pyrimidine metabolism; UMP biosynthesis via salvage pathway; UMP from uracil: step 1/1. With respect to regulation, allosterically activated by GTP. In terms of biological role, catalyzes the conversion of uracil and 5-phospho-alpha-D-ribose 1-diphosphate (PRPP) to UMP and diphosphate. The protein is Uracil phosphoribosyltransferase of Levilactobacillus brevis (strain ATCC 367 / BCRC 12310 / CIP 105137 / JCM 1170 / LMG 11437 / NCIMB 947 / NCTC 947) (Lactobacillus brevis).